A 274-amino-acid chain; its full sequence is Urease accessory protein UreD 2 (274 aa).

This sequence belongs to the UreD family. As to quaternary structure, ureD, UreF and UreG form a complex that acts as a GTP-hydrolysis-dependent molecular chaperone, activating the urease apoprotein by helping to assemble the nickel containing metallocenter of UreC. The UreE protein probably delivers the nickel.

The protein resides in the cytoplasm. Functionally, required for maturation of urease via the functional incorporation of the urease nickel metallocenter. This is Urease accessory protein UreD 2 from Brucella anthropi (strain ATCC 49188 / DSM 6882 / CCUG 24695 / JCM 21032 / LMG 3331 / NBRC 15819 / NCTC 12168 / Alc 37) (Ochrobactrum anthropi).